An 82-amino-acid chain; its full sequence is Small ribosomal subunit protein bS16 (82 aa).

The protein belongs to the bacterial ribosomal protein bS16 family.

In Edwardsiella ictaluri (strain 93-146), this protein is Small ribosomal subunit protein bS16.